The chain runs to 283 residues: ATP phosphoribosyltransferase (283 aa).

The protein belongs to the ATP phosphoribosyltransferase family. Long subfamily. Mg(2+) is required as a cofactor.

It is found in the cytoplasm. The enzyme catalyses 1-(5-phospho-beta-D-ribosyl)-ATP + diphosphate = 5-phospho-alpha-D-ribose 1-diphosphate + ATP. It participates in amino-acid biosynthesis; L-histidine biosynthesis; L-histidine from 5-phospho-alpha-D-ribose 1-diphosphate: step 1/9. Its activity is regulated as follows. Feedback inhibited by histidine. Functionally, catalyzes the condensation of ATP and 5-phosphoribose 1-diphosphate to form N'-(5'-phosphoribosyl)-ATP (PR-ATP). Has a crucial role in the pathway because the rate of histidine biosynthesis seems to be controlled primarily by regulation of HisG enzymatic activity. The sequence is that of ATP phosphoribosyltransferase from Nocardia farcinica (strain IFM 10152).